Reading from the N-terminus, the 382-residue chain is Putative phospholipase A1 (382 aa).

A signal peptide spans 1-27 (MPTMGAEMNTRNMRYILLTGLLPMASA). Residues 28–65 (FGETALQCAALTDNVTRLACYDRIFAAQLPSSAGQEGQ) lie on the Periplasmic side of the membrane. The beta stranded transmembrane segment at 66–78 (ESKAVLNLTETVR) threads the bilayer. At 79–168 (SSLDKGEAVI…VQEKFGQQKR (90 aa)) the chain is on the extracellular side. The beta stranded transmembrane segment at 169 to 183 (AETKLQVSFKSKIAE) threads the bilayer. At 184 to 189 (DLFKTR) the chain is on the periplasmic side. A beta stranded membrane pass occupies residues 190-202 (ADLWFGYTQRSDW). Residues 203–213 (QIYNQGRKSAP) lie on the Extracellular side of the membrane. S211 serves as a coordination point for Ca(2+). The beta stranded transmembrane segment at 214 to 233 (FRNTDYKPEIFLTQPVKADL) threads the bilayer. Residues 234-236 (PFG) are Periplasmic-facing. The chain crosses the membrane as a beta stranded span at residues 237–250 (GRLRMLGAGFVHQS). H248 acts as the Proton acceptor in catalysis. S250 (nucleophile) is an active-site residue. Topologically, residues 251–259 (NGQSRPESR) are extracellular. Position 258 (S258) interacts with Ca(2+). The beta stranded transmembrane segment at 260–272 (SWNRIYAMAGMEW) threads the bilayer. The Periplasmic segment spans residues 273–274 (GK). A beta stranded membrane pass occupies residues 275 to 284 (LTVIPRVWVR). Over 285 to 306 (AFDQSGDKNDNPDIADYMGYGD) the chain is Extracellular. D294 provides a ligand contact to Ca(2+). The beta stranded transmembrane segment at 307–313 (VKLQYRL) threads the bilayer. At 314–315 (ND) the chain is on the periplasmic side. The beta stranded transmembrane segment at 316–325 (RQNVYSVLRY) threads the bilayer. At 326–332 (NPKTGYG) the chain is on the extracellular side. The beta stranded transmembrane segment at 333–341 (AIEAAYTFP) threads the bilayer. Topologically, residues 342-346 (IKGKL) are periplasmic. The chain crosses the membrane as a beta stranded span at residues 347-356 (KGVVRGFHGY). Over 357-365 (GESLIDYNH) the chain is Extracellular. The chain crosses the membrane as a beta stranded span at residues 366–377 (KQNGIGIGLMFN). At 378-382 (DLDGI) the chain is on the periplasmic side.

It belongs to the phospholipase A1 family. Homodimer; dimerization is reversible, and the dimeric form is the active one. Requires Ca(2+) as cofactor.

Its subcellular location is the cell outer membrane. The enzyme catalyses a 1,2-diacyl-sn-glycero-3-phosphocholine + H2O = a 2-acyl-sn-glycero-3-phosphocholine + a fatty acid + H(+). It catalyses the reaction a 1,2-diacyl-sn-glycero-3-phosphocholine + H2O = a 1-acyl-sn-glycero-3-phosphocholine + a fatty acid + H(+). Hydrolysis of phosphatidylcholine with phospholipase A2 (EC 3.1.1.4) and phospholipase A1 (EC 3.1.1.32) activities. In Neisseria meningitidis serogroup B (strain ATCC BAA-335 / MC58), this protein is Putative phospholipase A1.